The chain runs to 104 residues: Thioredoxin (104 aa).

The Thioredoxin domain maps to 2–104; the sequence is AIVKVTDSDF…NLAEVLDKHL (103 aa). An intrachain disulfide couples Cys29 to Cys32.

It belongs to the thioredoxin family.

Its function is as follows. Component of the thioredoxin-thioredoxin reductase system. Participates in various redox reactions through the reversible oxidation of its active center dithiol to a disulfide and catalyzes dithiol-disulfide exchange reactions. This chain is Thioredoxin (trxA), found in Staphylococcus epidermidis (strain ATCC 35984 / DSM 28319 / BCRC 17069 / CCUG 31568 / BM 3577 / RP62A).